The following is a 479-amino-acid chain: Glycerol-3-phosphate acyltransferase RAM2 (479 aa).

Helical transmembrane passes span 14-34, 37-57, 215-235, and 237-257; these read YFAL…LVLA, LAGL…LIFA, SPLM…LACL, and IAAG…ALGV. The HXXXXD motif motif lies at 284–289; that stretch reads HRTLLD. N-linked (GlcNAc...) asparagine glycosylation is present at Asn448.

It belongs to the GPAT/DAPAT family.

It localises to the membrane. It catalyses the reaction sn-glycerol 3-phosphate + an acyl-CoA = a 1-acyl-sn-glycero-3-phosphate + CoA. The protein operates within lipid metabolism; glycerolipid metabolism. Functionally, involved in the production of cutin monomers. Esterifies acyl-group from acyl-ACP to the sn-2 position of glycerol-3-phosphate, a step in cutin biosynthesis. Required for colonization of the root by mycorrhizal fungi, and appropriate hyphopodia and arbuscule formation. Cutin monomers act as plant signals that promote colonization by arbuscular mycorrhizal fungi. This signaling function has been recruited by pathogenic oomycetes to facilitate appressoria formation and their own invasion. This chain is Glycerol-3-phosphate acyltransferase RAM2, found in Petunia hybrida (Petunia).